The sequence spans 99 residues: Large ribosomal subunit protein uL23 (99 aa).

The protein belongs to the universal ribosomal protein uL23 family. As to quaternary structure, part of the 50S ribosomal subunit. Contacts protein L29, and trigger factor when it is bound to the ribosome.

Functionally, one of the early assembly proteins it binds 23S rRNA. One of the proteins that surrounds the polypeptide exit tunnel on the outside of the ribosome. Forms the main docking site for trigger factor binding to the ribosome. The protein is Large ribosomal subunit protein uL23 of Rhodopseudomonas palustris (strain HaA2).